The chain runs to 313 residues: Nucleotide-binding protein Swit_0399 (313 aa).

20 to 27 (GMSGSGKK) lines the ATP pocket. 73-76 (DSRT) lines the GTP pocket. Residues 289–313 (PTVRHRDLTRQKSNAEESTVPGVGS) are disordered. Over residues 292–303 (RHRDLTRQKSNA) the composition is skewed to basic and acidic residues.

The protein belongs to the RapZ-like family.

Its function is as follows. Displays ATPase and GTPase activities. The sequence is that of Nucleotide-binding protein Swit_0399 from Rhizorhabdus wittichii (strain DSM 6014 / CCUG 31198 / JCM 15750 / NBRC 105917 / EY 4224 / RW1) (Sphingomonas wittichii).